A 316-amino-acid polypeptide reads, in one-letter code: MTSPKDNQTAKPVCFQDVILRLQSYWAAQGCAVLQPYDMEVGAGTFHPATTLRSLGARPWAAAYVQPSRRPTDGRYGENPNRLQHYYQYQVIIKPSPPNLQELYLGSLAAIGLDPMIHDVRFVEDDWESPTLGAWGLGWEVWCDGMEVSQFTYFQQVGGHDCRPVSGELTYGLERLAMYVLGVEHVMDMPFNPPGSPIPLSYGDVFRQAEREYSRWNFEQADTGMLLQHFKDAEAECDRILTAAETDSAGRRIPMAHPAYDQAIKASHLFNLLDARGVISVTERQAYIGRVRALAKRCADLFVTTEAATLQAEDAA.

Belongs to the class-II aminoacyl-tRNA synthetase family. Tetramer of two alpha and two beta subunits.

The protein localises to the cytoplasm. It catalyses the reaction tRNA(Gly) + glycine + ATP = glycyl-tRNA(Gly) + AMP + diphosphate. The sequence is that of Glycine--tRNA ligase alpha subunit from Paracoccus denitrificans (strain Pd 1222).